We begin with the raw amino-acid sequence, 314 residues long: D-alanine--D-alanine ligase (314 aa).

Residues 114-309 (KQLWRAHGLP…FDALVLRILD (196 aa)) form the ATP-grasp domain. Residue 140 to 195 (IEALGLPLIVKPVHEGSTIGISIVETRDALIAAHAEASRFDSAIMAERFVQGEEYT) coordinates ATP. Mg(2+) contacts are provided by D263, E276, and N278.

The protein belongs to the D-alanine--D-alanine ligase family. It depends on Mg(2+) as a cofactor. Requires Mn(2+) as cofactor.

The protein localises to the cytoplasm. The catalysed reaction is 2 D-alanine + ATP = D-alanyl-D-alanine + ADP + phosphate + H(+). The protein operates within cell wall biogenesis; peptidoglycan biosynthesis. Its function is as follows. Cell wall formation. The protein is D-alanine--D-alanine ligase of Chromohalobacter salexigens (strain ATCC BAA-138 / DSM 3043 / CIP 106854 / NCIMB 13768 / 1H11).